A 181-amino-acid chain; its full sequence is TATA-box-binding protein C (181 aa).

2 tandem repeats follow at residues 5–83 and 99–177.

This sequence belongs to the TBP family.

Functionally, general factor that plays a role in the activation of archaeal genes transcribed by RNA polymerase. Binds specifically to the TATA box promoter element which lies close to the position of transcription initiation. The sequence is that of TATA-box-binding protein C (tbpC1) from Halobacterium salinarum (strain ATCC 700922 / JCM 11081 / NRC-1) (Halobacterium halobium).